The following is a 346-amino-acid chain: Extracellular protease (346 aa).

Positions 1-21 (MMKATPIALLLAGVLASPLCA) are cleaved as a signal peptide. Histidine 296 contacts Zn(2+). Residue glutamate 297 is part of the active site. Histidine 300 and aspartate 309 together coordinate Zn(2+).

The protein belongs to the peptidase M35 family. It depends on Zn(2+) as a cofactor.

Functionally, heat-labile protease. In Aeromonas hydrophila, this protein is Extracellular protease.